The chain runs to 461 residues: tRNA modification GTPase MnmE (461 aa).

(6S)-5-formyl-5,6,7,8-tetrahydrofolate is bound by residues arginine 22, glutamate 87, and arginine 126. One can recognise a TrmE-type G domain in the interval 222–382 (GITAVIAGKP…LENKLYEILI (161 aa)). Asparagine 232 is a K(+) binding site. GTP-binding positions include 232–237 (NVGKSS), 251–257 (TDIPGTT), 276–279 (DTAG), and 363–365 (SAR). Serine 236 lines the Mg(2+) pocket. K(+) is bound by residues threonine 251, isoleucine 253, and threonine 256. Threonine 257 is a binding site for Mg(2+). Lysine 461 lines the (6S)-5-formyl-5,6,7,8-tetrahydrofolate pocket.

It belongs to the TRAFAC class TrmE-Era-EngA-EngB-Septin-like GTPase superfamily. TrmE GTPase family. In terms of assembly, homodimer. Heterotetramer of two MnmE and two MnmG subunits. It depends on K(+) as a cofactor.

It is found in the cytoplasm. In terms of biological role, exhibits a very high intrinsic GTPase hydrolysis rate. Involved in the addition of a carboxymethylaminomethyl (cmnm) group at the wobble position (U34) of certain tRNAs, forming tRNA-cmnm(5)s(2)U34. This Carboxydothermus hydrogenoformans (strain ATCC BAA-161 / DSM 6008 / Z-2901) protein is tRNA modification GTPase MnmE.